A 361-amino-acid polypeptide reads, in one-letter code: Histidinol-phosphate aminotransferase (361 aa).

Lys-219 carries the N6-(pyridoxal phosphate)lysine modification.

Belongs to the class-II pyridoxal-phosphate-dependent aminotransferase family. Histidinol-phosphate aminotransferase subfamily. Homodimer. Pyridoxal 5'-phosphate is required as a cofactor.

The enzyme catalyses L-histidinol phosphate + 2-oxoglutarate = 3-(imidazol-4-yl)-2-oxopropyl phosphate + L-glutamate. The protein operates within amino-acid biosynthesis; L-histidine biosynthesis; L-histidine from 5-phospho-alpha-D-ribose 1-diphosphate: step 7/9. This Acinetobacter baylyi (strain ATCC 33305 / BD413 / ADP1) protein is Histidinol-phosphate aminotransferase.